A 92-amino-acid chain; its full sequence is MRFFQVGLLCLALFVQYRLWFGHNGVQDYTRLKSAVASHLQTNEKLIKRNKVLTADIEDLKLGHEGIEERARNELGMIKAGETFIRVLPAQQ.

At 1–3 the chain is on the cytoplasmic side; it reads MRF. A helical membrane pass occupies residues 4–21; sequence FQVGLLCLALFVQYRLWF. Residues 22 to 92 are Periplasmic-facing; that stretch reads GHNGVQDYTR…TFIRVLPAQQ (71 aa). Positions 40–73 form a coiled coil; the sequence is LQTNEKLIKRNKVLTADIEDLKLGHEGIEERARN.

Belongs to the FtsB family. In terms of assembly, part of a complex composed of FtsB, FtsL and FtsQ.

Its subcellular location is the cell inner membrane. Its function is as follows. Essential cell division protein. May link together the upstream cell division proteins, which are predominantly cytoplasmic, with the downstream cell division proteins, which are predominantly periplasmic. This is Cell division protein FtsB from Pseudoalteromonas translucida (strain TAC 125).